Consider the following 505-residue polypeptide: ATP synthase subunit alpha (505 aa).

ATP is bound at residue 170–177 (GDRQTGKT).

The protein belongs to the ATPase alpha/beta chains family. As to quaternary structure, F-type ATPases have 2 components, CF(1) - the catalytic core - and CF(0) - the membrane proton channel. CF(1) has five subunits: alpha(3), beta(3), gamma(1), delta(1), epsilon(1). CF(0) has four main subunits: a(1), b(1), b'(1) and c(9-12).

It is found in the cellular thylakoid membrane. The enzyme catalyses ATP + H2O + 4 H(+)(in) = ADP + phosphate + 5 H(+)(out). Produces ATP from ADP in the presence of a proton gradient across the membrane. The alpha chain is a regulatory subunit. This chain is ATP synthase subunit alpha, found in Synechococcus sp. (strain RCC307).